The following is a 209-amino-acid chain: Thymidylate kinase (209 aa).

7 to 14 (GVEGSGKS) lines the ATP pocket.

This sequence belongs to the thymidylate kinase family.

It carries out the reaction dTMP + ATP = dTDP + ADP. Phosphorylation of dTMP to form dTDP in both de novo and salvage pathways of dTTP synthesis. This is Thymidylate kinase from Solidesulfovibrio magneticus (strain ATCC 700980 / DSM 13731 / RS-1) (Desulfovibrio magneticus).